The primary structure comprises 359 residues: Probable E3 ubiquitin-protein ligase LUL4 (359 aa).

A disordered region spans residues 1 to 35; that stretch reads MGISFSNNNRRRDNNNRRHLHHYPPPPPYYYLDPP. Gly-2 carries N-myristoyl glycine lipidation. The segment covering 23 to 35 has biased composition (pro residues); that stretch reads YPPPPPYYYLDPP. The DAR2 domain stretch occupies residues 148–267; it reads FVFDALFDGS…GSFKVKVVKQ (120 aa). Residues 302–341 form an RING-type zinc finger; that stretch reads CVICMTEAKDTAVLPCRHLCMCSDCAKELRLQSNKCPICR.

This sequence belongs to the RING-type zinc finger family. LOG2 subfamily.

The enzyme catalyses S-ubiquitinyl-[E2 ubiquitin-conjugating enzyme]-L-cysteine + [acceptor protein]-L-lysine = [E2 ubiquitin-conjugating enzyme]-L-cysteine + N(6)-ubiquitinyl-[acceptor protein]-L-lysine.. It participates in protein modification; protein ubiquitination. Acts as an E3 ubiquitin-protein ligase, or as part of E3 complex, which accepts ubiquitin from specific E2 ubiquitin-conjugating enzymes and then transfers it to substrates (in vitro). This chain is Probable E3 ubiquitin-protein ligase LUL4 (LUL4), found in Arabidopsis thaliana (Mouse-ear cress).